A 95-amino-acid polypeptide reads, in one-letter code: Large ribosomal subunit protein uL23 (95 aa).

The protein belongs to the universal ribosomal protein uL23 family. As to quaternary structure, part of the 50S ribosomal subunit. Contacts protein L29, and trigger factor when it is bound to the ribosome.

One of the early assembly proteins it binds 23S rRNA. One of the proteins that surrounds the polypeptide exit tunnel on the outside of the ribosome. Forms the main docking site for trigger factor binding to the ribosome. The polypeptide is Large ribosomal subunit protein uL23 (Desulforapulum autotrophicum (strain ATCC 43914 / DSM 3382 / VKM B-1955 / HRM2) (Desulfobacterium autotrophicum)).